Here is a 134-residue protein sequence, read N- to C-terminus: Phosphoribosyl-AMP cyclohydrolase (134 aa).

Aspartate 80 is a Mg(2+) binding site. Residue cysteine 81 coordinates Zn(2+). Positions 82 and 84 each coordinate Mg(2+). Zn(2+)-binding residues include cysteine 98 and cysteine 105.

It belongs to the PRA-CH family. As to quaternary structure, homodimer. The cofactor is Mg(2+). Zn(2+) is required as a cofactor.

The protein resides in the cytoplasm. It carries out the reaction 1-(5-phospho-beta-D-ribosyl)-5'-AMP + H2O = 1-(5-phospho-beta-D-ribosyl)-5-[(5-phospho-beta-D-ribosylamino)methylideneamino]imidazole-4-carboxamide. It participates in amino-acid biosynthesis; L-histidine biosynthesis; L-histidine from 5-phospho-alpha-D-ribose 1-diphosphate: step 3/9. Its function is as follows. Catalyzes the hydrolysis of the adenine ring of phosphoribosyl-AMP. The chain is Phosphoribosyl-AMP cyclohydrolase from Herminiimonas arsenicoxydans.